Reading from the N-terminus, the 1152-residue chain is MATLDNCTQVHHMFAYNREHGTNYTRNHFRRYLAAQRIGFYYDWDDDVYECPTCEAIYHSLDEIKNWHECDPPAFDLNDFITDARLKSAPVPDLGPVIVETPKVEEKQELNFFAATPAPEVLQWKCRGLQFGSFTELETSEPVVSAPKPNCEEPARTIAKPEEPVEQETCGDGKRLLQAQMEVDKAEQDLAFAYLSASLKPRLEGRTTATIARRRDGCLVYKTKPSWSQRKGTKKILKVDTLACKNPYIPAVVDKISIAGGSSASVMHEQQKPKILHTTPSRKVATHYKRTVMNQQTLTALINQVGTIILNAEKEFEVVGCRKQKVTGKGTRHNGVRLVKLKTAHEEGHRRKVDIRIPNGLRSIVTRISARGGWHKTWTDSELSPGSSGYVLNSSKIIGEFGLRRHSIFVVRGRVYGKIIDSQSKVTHTLTHRMVQYSDVARNFWNGYSTCFMHNTPKDILHTCTSDFDVKDCGTVAALLTQTLFQFGKITCGKCAIEYKNLTRDELATRVNKEIDGTIISIQTQHPRFVHVLNFLRLIKQVLNAKNGNFGAFQETERIIGDRMDAPFSHVNKLNAIVIKGNQATSDEMAQASNHVLEIARYFKNRTENIQKGSLKSFRNKISGKAHLNPSLMCDNQLDKNGGFEWGQRSYHAKRFFDGYFETIDPSDGYSKYTIRRNPNGHRKLAIGNLIVSTNFESHRRSMVGEPIEDPGLTNQCVSKEGGAFIYPCCCVTDEYGKPTLSEIKMPTKHHLVLGNAGDPKYVDLPKEAEGKMFVAKDGYCYINIFLAMLVDVPEDQAKDFTKMAREIAVKQLGEWPSMMDVATACNILATFHPDTRRSELPRILVDHATKTFHVIDSYGSITTGYHILKANTVTQLVKFAHESLESEMQHYRVGGEPDKAPRKPAGNVPTLGISDLKNLGVESENEEHSIRPNLQRLIKAIYRPRMMRSLLTEEPYLLILSIVSPGVLMALYNSGSLERTMHEFLQTDQRLSATAQILKHLAKKVSLAKTLTIQNAILEGGAGSLNEILDAPAGRSLSYRLAKQTVEVMMARSDMDKELVDVGFSVLRDQKNELIEKKLSHGFGGLVARIAIVWKIISNASLAAMAGHLYSRSNPNRCRRFERQIQYLGWVCFQKRDLAPKGNLLRRSKES.

A Peptidase S30 domain is found at 292–437 (VMNQQTLTAL…HTLTHRMVQY (146 aa)). Active-site for P1 proteinase activity residues include histidine 345, aspartate 354, and serine 388. The Involved in interaction with stylet and aphid transmission motif lies at 489 to 492 (KITC). The Involved in virions binding and aphid transmission motif lies at 747 to 749 (PTK). Positions 773 to 895 (MFVAKDGYCY…ESEMQHYRVG (123 aa)) constitute a Peptidase C6 domain. Residues cysteine 781 and histidine 854 each act as for helper component proteinase activity in the active site.

Belongs to the potyviridae P3N-PIPO polyprotein family. Interacts (via PIPO domain) with host PCaP1 protein; this interaction may help to anchor the movement complex to the plasma membrane from which the complex could move to the plasmodesmata. Potyviral RNA is expressed as two polyproteins which undergo post-translational proteolytic processing. Genome polyprotein is processed by NIa-pro, P1 and HC-pro proteinases resulting in the production of at least ten individual proteins. P3N-PIPO is cleaved by P1 and HC-pro proteinases resulting in the production of three individual proteins. The P1 proteinase and the HC-pro cleave only their respective C-termini autocatalytically.

The protein resides in the host cell junction. The protein localises to the host plasmodesma. It carries out the reaction Hydrolyzes a Gly-|-Gly bond at its own C-terminus, commonly in the sequence -Tyr-Xaa-Val-Gly-|-Gly, in the processing of the potyviral polyprotein.. Required for aphid transmission and also has proteolytic activity. Only cleaves a Gly-Gly dipeptide at its own C-terminus. Interacts with virions and aphid stylets. Acts as a suppressor of RNA-mediated gene silencing, also known as post-transcriptional gene silencing (PTGS), a mechanism of plant viral defense that limits the accumulation of viral RNAs. May have RNA-binding activity. Its function is as follows. Allows efficient cell to cell propagation, by bypassing the host cell wall barrier. Transports viral genome to neighboring plant cells directly through plasmosdesmata, without any budding. The sequence is that of P3N-PIPO polyprotein from Carthamus tinctorius (Safflower).